A 70-amino-acid polypeptide reads, in one-letter code: DNA gyrase inhibitor YacG (70 aa).

Residues Cys7, Cys10, Cys26, and Cys30 each contribute to the Zn(2+) site.

This sequence belongs to the DNA gyrase inhibitor YacG family. As to quaternary structure, interacts with GyrB. It depends on Zn(2+) as a cofactor.

Its function is as follows. Inhibits all the catalytic activities of DNA gyrase by preventing its interaction with DNA. Acts by binding directly to the C-terminal domain of GyrB, which probably disrupts DNA binding by the gyrase. In Shewanella sediminis (strain HAW-EB3), this protein is DNA gyrase inhibitor YacG.